The sequence spans 205 residues: Small ribosomal subunit protein uS4 (205 aa).

The disordered stretch occupies residues asparagine 18–serine 46. The 64-residue stretch at arginine 94–threonine 157 folds into the S4 RNA-binding domain.

This sequence belongs to the universal ribosomal protein uS4 family. In terms of assembly, part of the 30S ribosomal subunit. Contacts protein S5. The interaction surface between S4 and S5 is involved in control of translational fidelity.

One of the primary rRNA binding proteins, it binds directly to 16S rRNA where it nucleates assembly of the body of the 30S subunit. Functionally, with S5 and S12 plays an important role in translational accuracy. The protein is Small ribosomal subunit protein uS4 of Bradyrhizobium sp. (strain BTAi1 / ATCC BAA-1182).